Here is a 388-residue protein sequence, read N- to C-terminus: Lipid-A-disaccharide synthase (388 aa).

This sequence belongs to the LpxB family.

It catalyses the reaction a lipid X + a UDP-2-N,3-O-bis[(3R)-3-hydroxyacyl]-alpha-D-glucosamine = a lipid A disaccharide + UDP + H(+). It participates in bacterial outer membrane biogenesis; LPS lipid A biosynthesis. Condensation of UDP-2,3-diacylglucosamine and 2,3-diacylglucosamine-1-phosphate to form lipid A disaccharide, a precursor of lipid A, a phosphorylated glycolipid that anchors the lipopolysaccharide to the outer membrane of the cell. The chain is Lipid-A-disaccharide synthase from Saccharophagus degradans (strain 2-40 / ATCC 43961 / DSM 17024).